We begin with the raw amino-acid sequence, 241 residues long: Probable pectate lyase D (241 aa).

The signal sequence occupies residues M1–A17. N215 carries N-linked (GlcNAc...) asparagine glycosylation. The segment at N215 to C241 is disordered.

The protein belongs to the polysaccharide lyase 3 family. Requires Ca(2+) as cofactor.

It is found in the secreted. It carries out the reaction Eliminative cleavage of (1-&gt;4)-alpha-D-galacturonan to give oligosaccharides with 4-deoxy-alpha-D-galact-4-enuronosyl groups at their non-reducing ends.. Its function is as follows. Pectinolytic enzyme consist of four classes of enzymes: pectin lyase, polygalacturonase, pectin methylesterase and rhamnogalacturonase. Among pectinolytic enzymes, pectin lyase is the most important in depolymerization of pectin, since it cleaves internal glycosidic bonds of highly methylated pectins. Favors pectate, the anion, over pectin, the methyl ester. This is Probable pectate lyase D (plyD) from Neosartorya fischeri (strain ATCC 1020 / DSM 3700 / CBS 544.65 / FGSC A1164 / JCM 1740 / NRRL 181 / WB 181) (Aspergillus fischerianus).